Consider the following 238-residue polypeptide: Protein shisa-3 homolog (238 aa).

An N-terminal signal peptide occupies residues 1 to 21 (MRALLALCLLLGWLRWGPAGA). Over 22–98 (QQSGEYCHGW…GITAQPVYVP (77 aa)) the chain is Lumenal. A helical membrane pass occupies residues 99-119 (FLIVGSIFIAFIILGSVVAIY). The Cytoplasmic segment spans residues 120–238 (CCTCLRPKEP…GKSCPDFSSS (119 aa)). The interval 151-173 (TSTSPRAPSRQSSTATSSSSTGG) is disordered. Positions 159-173 (SRQSSTATSSSSTGG) are enriched in low complexity.

It belongs to the shisa family.

It localises to the endoplasmic reticulum membrane. Functionally, plays an essential role in the maturation of presomitic mesoderm cells by individual attenuation of both FGF and WNT signaling. The polypeptide is Protein shisa-3 homolog (SHISA3) (Homo sapiens (Human)).